A 665-amino-acid polypeptide reads, in one-letter code: Methionine--tRNA ligase (665 aa).

Residues 16-26 carry the 'HIGH' region motif; sequence YYPSGKAHIGH. Positions 311 to 315 match the 'KMSKS' region motif; sequence KMSKS. Residue Lys314 participates in ATP binding. In terms of domain architecture, tRNA-binding spans 564-665; it reads DFDKIDLRVA…SALPNGAKVK (102 aa).

This sequence belongs to the class-I aminoacyl-tRNA synthetase family. MetG type 2B subfamily. Homodimer.

It localises to the cytoplasm. It catalyses the reaction tRNA(Met) + L-methionine + ATP = L-methionyl-tRNA(Met) + AMP + diphosphate. Its function is as follows. Is required not only for elongation of protein synthesis but also for the initiation of all mRNA translation through initiator tRNA(fMet) aminoacylation. The chain is Methionine--tRNA ligase from Listeria monocytogenes serotype 4b (strain F2365).